The primary structure comprises 290 residues: Porphobilinogen deaminase (290 aa).

An S-(dipyrrolylmethanemethyl)cysteine modification is found at Cys238.

Belongs to the HMBS family. In terms of assembly, monomer. It depends on dipyrromethane as a cofactor.

The enzyme catalyses 4 porphobilinogen + H2O = hydroxymethylbilane + 4 NH4(+). The protein operates within porphyrin-containing compound metabolism; protoporphyrin-IX biosynthesis; coproporphyrinogen-III from 5-aminolevulinate: step 2/4. Functionally, tetrapolymerization of the monopyrrole PBG into the hydroxymethylbilane pre-uroporphyrinogen in several discrete steps. The sequence is that of Porphobilinogen deaminase from Caldicellulosiruptor saccharolyticus (strain ATCC 43494 / DSM 8903 / Tp8T 6331).